The sequence spans 179 residues: MAKLHDKYQETVVAELTQKFGYTSVMQVPRIEKITLNMGVGEAVADKKVMEHAVRDMTAIAGQKPVVTVARKSVAGFKIREGYPIGCKVTLRGERMWEFLERLVDIAIPRIRDFRGLSAKAFDGRGNYAMGVREQIIFPEIDYDKIDKIRGMDIVITTSAKTDEEGRALLDAFNFPFKK.

Belongs to the universal ribosomal protein uL5 family. As to quaternary structure, part of the 50S ribosomal subunit; part of the 5S rRNA/L5/L18/L25 subcomplex. Contacts the 5S rRNA and the P site tRNA. Forms a bridge to the 30S subunit in the 70S ribosome.

This is one of the proteins that bind and probably mediate the attachment of the 5S RNA into the large ribosomal subunit, where it forms part of the central protuberance. In the 70S ribosome it contacts protein S13 of the 30S subunit (bridge B1b), connecting the 2 subunits; this bridge is implicated in subunit movement. Contacts the P site tRNA; the 5S rRNA and some of its associated proteins might help stabilize positioning of ribosome-bound tRNAs. This is Large ribosomal subunit protein uL5 from Shewanella oneidensis (strain ATCC 700550 / JCM 31522 / CIP 106686 / LMG 19005 / NCIMB 14063 / MR-1).